A 446-amino-acid chain; its full sequence is tRNA modification GTPase MnmE (446 aa).

3 residues coordinate (6S)-5-formyl-5,6,7,8-tetrahydrofolate: Arg28, Glu85, and Lys124. The 153-residue stretch at 220-372 (GLTVVLVGQP…LRAKLLQAAG (153 aa)) folds into the TrmE-type G domain. Asn230 contributes to the K(+) binding site. Residues 230 to 235 (NVGKSS), 249 to 255 (TEIAGTT), and 274 to 277 (DTAG) each bind GTP. Ser234 is a binding site for Mg(2+). K(+) is bound by residues Thr249, Ile251, and Thr254. Residue Thr255 participates in Mg(2+) binding. Lys446 serves as a coordination point for (6S)-5-formyl-5,6,7,8-tetrahydrofolate.

It belongs to the TRAFAC class TrmE-Era-EngA-EngB-Septin-like GTPase superfamily. TrmE GTPase family. Homodimer. Heterotetramer of two MnmE and two MnmG subunits. K(+) serves as cofactor.

The protein resides in the cytoplasm. Exhibits a very high intrinsic GTPase hydrolysis rate. Involved in the addition of a carboxymethylaminomethyl (cmnm) group at the wobble position (U34) of certain tRNAs, forming tRNA-cmnm(5)s(2)U34. The chain is tRNA modification GTPase MnmE from Thiobacillus denitrificans (strain ATCC 25259 / T1).